The primary structure comprises 244 residues: Claudin-12 (244 aa).

The Cytoplasmic portion of the chain corresponds to 1-10 (MGCRDVHAAT). A helical transmembrane segment spans residues 11 to 31 (VLSFLCGIASVAGLFAGTLLP). Over 32-87 (NWRKLRLITFNRNEKNLTVYTGLWVKCARYDGSSDCLMYDTTWYSSVDQLDLRVLQ) the chain is Extracellular. A helical membrane pass occupies residues 88–108 (FALPLSMLIAMGALLLCLIGM). At 109-135 (CNTAFRSSVPNIKLAKCLVNSAGCHLV) the chain is on the cytoplasmic side. Residues 136 to 156 (AGLLFFLAGTVSLSPSIWVIF) form a helical membrane-spanning segment. Over 157-174 (YNIHLNKKFEPVFSFDYA) the chain is Extracellular. Residues 175–195 (VYVTIASAGGLFMTSLILFIW) form a helical membrane-spanning segment. The Cytoplasmic segment spans residues 196 to 244 (YCTCKSLPSPFWQPLYSHPPSMHTYSQPYSARSRLSAIEIDIPVVSHTT). 2 positions are modified to phosphoserine: Ser-228 and Ser-231.

The protein belongs to the claudin family. In terms of assembly, interacts with OCLN.

The protein resides in the cell junction. The protein localises to the tight junction. It is found in the cell membrane. Plays a major role in tight junction-specific obliteration of the intercellular space, through calcium-independent cell-adhesion activity. The protein is Claudin-12 (CLDN12) of Pongo abelii (Sumatran orangutan).